The sequence spans 192 residues: uncharacterized protein (192 aa).

Positions 1–24 (MSGVLSCVLRACACAGLCCWVCMG) are cleaved as a signal peptide. The segment at 140–192 (RAGADEGAGGNAAGCPEDTRGFARSPGDLMGGMNGDLGDEGETGEGGDNGAGE) is disordered.

This is an uncharacterized protein from Human herpesvirus 6A (strain Uganda-1102) (HHV-6 variant A).